The primary structure comprises 520 residues: 2-isopropylmalate synthase (520 aa).

The Pyruvate carboxyltransferase domain occupies 4-266; that stretch reads VEFLDTTLRD…TSDIVLNETV (263 aa). The Mn(2+) site is built by aspartate 13, histidine 201, histidine 203, and asparagine 237. The regulatory domain stretch occupies residues 390–520; the sequence is HFGDLKLTSN…AVSFRDVPTN (131 aa).

The protein belongs to the alpha-IPM synthase/homocitrate synthase family. LeuA type 1 subfamily. As to quaternary structure, homodimer. Mn(2+) serves as cofactor.

It is found in the cytoplasm. The catalysed reaction is 3-methyl-2-oxobutanoate + acetyl-CoA + H2O = (2S)-2-isopropylmalate + CoA + H(+). It participates in amino-acid biosynthesis; L-leucine biosynthesis; L-leucine from 3-methyl-2-oxobutanoate: step 1/4. Functionally, catalyzes the condensation of the acetyl group of acetyl-CoA with 3-methyl-2-oxobutanoate (2-ketoisovalerate) to form 3-carboxy-3-hydroxy-4-methylpentanoate (2-isopropylmalate). The chain is 2-isopropylmalate synthase from Streptococcus gallolyticus (strain UCN34).